Reading from the N-terminus, the 478-residue chain is Vitronectin (478 aa).

Positions 1–19 (MAPLRPFFILALVAWVSLA) are cleaved as a signal peptide. In terms of domain architecture, SMB spans 20 to 63 (DQESCKGRCTQGFMASKKCQCDELCTYYQSCCADYMEQCKPQVT). Disulfide bonds link C24–C28, C24–C40, C28–C58, C38–C40, C38–C51, C44–C50, and C51–C58. A Cell attachment site motif is present at residues 64–66 (RGD). T69 bears the Phosphothreonine mark. Sulfotyrosine is present on residues Y75, Y78, and Y80. A disordered region spans residues 82-153 (EEPKNNTNTG…QGTPEFPEEE (72 aa)). The N-linked (GlcNAc...) asparagine glycan is linked to N86. Positions 86–99 (NNTNTGVQPENTSP) are enriched in polar residues. Positions 131–141 (EQQEEILRPDT) are enriched in basic and acidic residues. Hemopexin repeat units follow at residues 157–201 (GKPF…VWGI), 202–249 (EGPI…FSGI), and 250–304 (PDNV…FEHF). 2 N-linked (GlcNAc...) asparagine glycosylation sites follow: N168 and N241. Sulfotyrosine is present on residues Y278 and Y281. A disulfide bond links C292 and C431. Phosphoserine is present on residues S311 and S362. The disordered stretch occupies residues 359–395 (LSHSAQAKKQKSKRRSRKRYRSRRGRGHRRSQSSNSR). Residues 364 to 389 (QAKKQKSKRRSRKRYRSRRGRGHRRS) are compositionally biased toward basic residues. A heparin-binding region spans residues 366 to 399 (KKQKSKRRSRKRYRSRRGRGHRRSQSSNSRRSSR). Phosphoserine; by PKA is present on S398. Residues Y416, Y419, and Y421 each carry the sulfotyrosine modification. One copy of the Hemopexin 4 repeat lies at 420–473 (DYDMDWLVPATCEPIQSVYFFSGDKYYRVNLRTRRVDSVNPPYPRSIAQYWLGC).

In terms of assembly, interacts with SERPINE1/PAI1, insulin and C1QBP. Post-translationally, sulfated on tyrosine residues. In terms of processing, N- and O-glycosylated. It has been suggested that the active SMB domain may be permitted considerable disulfide bond heterogeneity or variability, thus two alternate disulfide patterns based on 3D structures are described with 1 disulfide bond conserved in both. Plasma.

The protein resides in the secreted. It is found in the extracellular space. Vitronectin is a cell adhesion and spreading factor found in serum and tissues. Vitronectin interact with glycosaminoglycans and proteoglycans. Is recognized by certain members of the integrin family and serves as a cell-to-substrate adhesion molecule. Inhibitor of the membrane-damaging effect of the terminal cytolytic complement pathway. The polypeptide is Vitronectin (Vtn) (Mus musculus (Mouse)).